The chain runs to 405 residues: Glyceraldehyde-3-phosphate dehydrogenase A, chloroplastic (405 aa).

A chloroplast-targeting transit peptide spans 1 to 68; sequence MASATFSVAK…GHKKSLVVEA (68 aa). NADP(+) is bound by residues 80–81, Asp-104, and Arg-149; that span reads RI. Residues 221-223, Thr-252, Arg-267, 280-281, and Arg-303 each bind D-glyceraldehyde 3-phosphate; these read SCT and TG. Cys-222 functions as the Nucleophile in the catalytic mechanism. Asn-385 lines the NADP(+) pocket.

It belongs to the glyceraldehyde-3-phosphate dehydrogenase family. As to quaternary structure, tetramer of either four A chains (GAPDH 2) or two A and two B chains (GAPDH 1).

It localises to the plastid. The protein resides in the chloroplast. It carries out the reaction D-glyceraldehyde 3-phosphate + phosphate + NADP(+) = (2R)-3-phospho-glyceroyl phosphate + NADPH + H(+). It functions in the pathway carbohydrate biosynthesis; Calvin cycle. In Pisum sativum (Garden pea), this protein is Glyceraldehyde-3-phosphate dehydrogenase A, chloroplastic (GAPA).